Consider the following 126-residue polypeptide: UPF0292 protein TSIB_0423 (126 aa).

Residues 20 to 100 (NGVILVEGMR…RVDTNTRREL (81 aa)) enclose the Toprim domain. The Mg(2+) site is built by Glu26, Asp69, and Asp71.

The protein belongs to the UPF0292 family. The cofactor is Mg(2+).

The polypeptide is UPF0292 protein TSIB_0423 (Thermococcus sibiricus (strain DSM 12597 / MM 739)).